A 463-amino-acid chain; its full sequence is Probable Xaa-Pro aminopeptidase pepP (463 aa).

The Mn(2+) site is built by aspartate 259, aspartate 270, glutamate 393, and glutamate 433.

Belongs to the peptidase M24B family. It depends on Mn(2+) as a cofactor.

The enzyme catalyses Release of any N-terminal amino acid, including proline, that is linked to proline, even from a dipeptide or tripeptide.. Functionally, catalyzes the removal of a penultimate prolyl residue from the N-termini of peptides. This is Probable Xaa-Pro aminopeptidase pepP (pepP) from Pyrenophora tritici-repentis (strain Pt-1C-BFP) (Wheat tan spot fungus).